A 487-amino-acid polypeptide reads, in one-letter code: 2-aminomuconic semialdehyde dehydrogenase (487 aa).

Gly-209–Gly-215 lines the NAD(+) pocket. Residue Glu-253 is the Proton acceptor of the active site. Catalysis depends on Cys-287, which acts as the Nucleophile. Ser-362 bears the Phosphoserine mark.

Belongs to the aldehyde dehydrogenase family. In terms of tissue distribution, highly expressed in adult kidney and liver. Detected at lower levels in fetal liver and kidney.

The protein resides in the cytoplasm. It catalyses the reaction 2-aminomuconate 6-semialdehyde + NAD(+) + H2O = (2Z,4E)-2-aminomuconate + NADH + 2 H(+). It participates in amino-acid degradation; L-kynurenine degradation. Its function is as follows. Catalyzes the NAD-dependent oxidation of 2-aminomuconic semialdehyde of the kynurenine metabolic pathway in L-tryptophan degradation. The protein is 2-aminomuconic semialdehyde dehydrogenase of Homo sapiens (Human).